We begin with the raw amino-acid sequence, 161 residues long: MPSFDIVSKMNEVDLRNAVDNAVREVSTRFDFRGVEATIELKDLTVTLRSESDFQVRQLEDLFRNHCSKRNLSTSGVEIEDEPVHSGKFYTLTMTFKQGIDQPTAKEIVKYIKDTKAKVQTSIQGDKVRVTGKKRDDLQETIALLKKSNIELPLQYENFRD.

The protein belongs to the YajQ family.

Its function is as follows. Nucleotide-binding protein. This Legionella pneumophila subsp. pneumophila (strain Philadelphia 1 / ATCC 33152 / DSM 7513) protein is Nucleotide-binding protein lpg1167.